The following is a 185-amino-acid chain: Ribosome maturation factor RimP (185 aa).

This sequence belongs to the RimP family.

Its subcellular location is the cytoplasm. Functionally, required for maturation of 30S ribosomal subunits. This chain is Ribosome maturation factor RimP, found in Magnetococcus marinus (strain ATCC BAA-1437 / JCM 17883 / MC-1).